Here is a 384-residue protein sequence, read N- to C-terminus: 8-amino-7-oxononanoate synthase (384 aa).

Arg21 provides a ligand contact to substrate. 108 to 109 (GY) is a binding site for pyridoxal 5'-phosphate. Residue His133 participates in substrate binding. Residues Ser179, His207, and Thr233 each coordinate pyridoxal 5'-phosphate. Residue Lys236 is modified to N6-(pyridoxal phosphate)lysine. Thr350 lines the substrate pocket.

It belongs to the class-II pyridoxal-phosphate-dependent aminotransferase family. BioF subfamily. As to quaternary structure, homodimer. Pyridoxal 5'-phosphate is required as a cofactor.

It carries out the reaction 6-carboxyhexanoyl-[ACP] + L-alanine + H(+) = (8S)-8-amino-7-oxononanoate + holo-[ACP] + CO2. Its pathway is cofactor biosynthesis; biotin biosynthesis. In terms of biological role, catalyzes the decarboxylative condensation of pimeloyl-[acyl-carrier protein] and L-alanine to produce 8-amino-7-oxononanoate (AON), [acyl-carrier protein], and carbon dioxide. In Buchnera aphidicola subsp. Baizongia pistaciae (strain Bp), this protein is 8-amino-7-oxononanoate synthase.